We begin with the raw amino-acid sequence, 582 residues long: MTQNKQGVVQSIAGPAVIADGMYGAKMYDIVRVGRERLVGEIIRLDGNTAFVQVYEDTSGLTVGEPVETTNLPLSVELGPGMLNGIYDGIQRPLDKIREASGDFIARGIEVSSLDRTKKWAFTPSVQPGDTVVGSGILGTVPEFSFTHKILTPPDKGGKLRWVAAAGEYTIDDTIAELEDGTKLRLAHYWPVRAPRPVQKKLDPSLPFLTGMRILDVLFPLVMGGAAAIPGPFGSGKTVTQQSVAKYGNADIVVYVGCGERGNEMTDVLVEFPELVDPKTGGPLMHRTILIANTSNMPVAAREASVYTGITLAEYFRDQGYSVSLMADSTSRWAEALREISSRLEEMPAEEGYPPYLGAKLAAFYERAGAVKTLSGDDGAVSVIGAVSPAGGDMSEPVTQATLRITGAFWRLDAGLARRRHFPAINWNGSYSLFTPILDKWYRQNVGPDFPELRQRITNLLQQEAALQEVVQLVGPDALQDNERLIIETGRMLRQDFLQQNGFDPVDASASMPKNYGLMKMFLKFYDEADLALKNGSTIDEIIQNPVIEKLARARYTPENEFAAYGEGVMDQLSTTFKGVKA.

231–238 contributes to the ATP binding site; that stretch reads GPFGSGKT.

This sequence belongs to the ATPase alpha/beta chains family.

The catalysed reaction is ATP + H2O + 4 H(+)(in) = ADP + phosphate + 5 H(+)(out). Functionally, produces ATP from ADP in the presence of a proton gradient across the membrane. The V-type alpha chain is a catalytic subunit. The chain is V-type ATP synthase alpha chain from Deinococcus deserti (strain DSM 17065 / CIP 109153 / LMG 22923 / VCD115).